The chain runs to 452 residues: Probable glycine dehydrogenase (decarboxylating) subunit 1 (452 aa).

This sequence belongs to the GcvP family. N-terminal subunit subfamily. As to quaternary structure, the glycine cleavage system is composed of four proteins: P, T, L and H. In this organism, the P 'protein' is a heterodimer of two subunits.

The enzyme catalyses N(6)-[(R)-lipoyl]-L-lysyl-[glycine-cleavage complex H protein] + glycine + H(+) = N(6)-[(R)-S(8)-aminomethyldihydrolipoyl]-L-lysyl-[glycine-cleavage complex H protein] + CO2. Functionally, the glycine cleavage system catalyzes the degradation of glycine. The P protein binds the alpha-amino group of glycine through its pyridoxal phosphate cofactor; CO(2) is released and the remaining methylamine moiety is then transferred to the lipoamide cofactor of the H protein. The chain is Probable glycine dehydrogenase (decarboxylating) subunit 1 from Sphingopyxis alaskensis (strain DSM 13593 / LMG 18877 / RB2256) (Sphingomonas alaskensis).